A 430-amino-acid polypeptide reads, in one-letter code: Tyrosine--tRNA ligase (430 aa).

Tyrosine 32 provides a ligand contact to L-tyrosine. Positions 37–46 (PTADSLHIGH) match the 'HIGH' region motif. Tyrosine 172 and glutamine 176 together coordinate L-tyrosine. The 'KMSKS' region motif lies at 232 to 236 (KFGKT). Residue lysine 235 participates in ATP binding. One can recognise an S4 RNA-binding domain in the interval 362–429 (VKAVDLFVDN…GKKNYYLIIA (68 aa)).

It belongs to the class-I aminoacyl-tRNA synthetase family. TyrS type 1 subfamily. Homodimer.

The protein resides in the cytoplasm. The enzyme catalyses tRNA(Tyr) + L-tyrosine + ATP = L-tyrosyl-tRNA(Tyr) + AMP + diphosphate + H(+). Functionally, catalyzes the attachment of tyrosine to tRNA(Tyr) in a two-step reaction: tyrosine is first activated by ATP to form Tyr-AMP and then transferred to the acceptor end of tRNA(Tyr). The protein is Tyrosine--tRNA ligase of Bacteroides fragilis (strain YCH46).